An 82-amino-acid polypeptide reads, in one-letter code: Cytotoxin 6 (82 aa).

Positions 1 to 21 are cleaved as a signal peptide; it reads MKTLLLTLVVVTIVCLDLGYT. Cystine bridges form between C24/C42, C35/C59, C63/C74, and C75/C80.

It belongs to the three-finger toxin family. Short-chain subfamily. Type IA cytotoxin sub-subfamily. In terms of assembly, monomer in solution; Homodimer and oligomer in the presence of negatively charged lipids forming a pore with a size ranging between 20 and 30 Angstroms. In terms of tissue distribution, expressed by the venom gland.

The protein localises to the secreted. The protein resides in the target cell membrane. Its function is as follows. Shows cytolytic activity on many different cells by forming pore in lipid membranes. In vivo, increases heart rate or kills the animal by cardiac arrest. In addition, it binds to heparin with high affinity, interacts with Kv channel-interacting protein 1 (KCNIP1) in a calcium-independent manner, and binds to integrin alpha-V/beta-3 (ITGAV/ITGB3) with moderate affinity. The chain is Cytotoxin 6 from Naja atra (Chinese cobra).